We begin with the raw amino-acid sequence, 1049 residues long: Ataxin-2-like protein (1049 aa).

Position 1 is an N-acetylmethionine (methionine 1). The tract at residues 1 to 54 is disordered; sequence MLKPQPPQQTSQPQQPPPTQQAVARRSPGGTSPPNGGLPGPLTATAAPPGPPAA. Residue serine 27 is modified to Phosphoserine. Threonine 45 is subject to Phosphothreonine. Residues 96 to 119 are interaction with MPL; that stretch reads SVRGQTTGKGPPQSPVFEGVYNNS. Serine 109 carries the phosphoserine modification. The residue at position 116 (tyrosine 116) is a Phosphotyrosine. The Sm domain maps to 120 to 197; the sequence is RMLHFLTAVV…VLLVHFRNVD (78 aa). Residue lysine 205 is modified to N6-acetyllysine. Residue serine 236 is modified to Phosphoserine. Tyrosine 262 is modified (phosphotyrosine). A Phosphoserine modification is found at serine 304. Tyrosine 307 carries the phosphotyrosine modification. Residues 314–326 are compositionally biased toward basic and acidic residues; that stretch reads ENDDGRTEEEKHS. Disordered stretches follow at residues 314-522, 554-573, 578-704, 736-772, 824-852, 868-944, and 999-1049; these read ENDD…RNLE, QFKL…FPSR, EAKG…LTAG, VSNS…PMMQ, SNPR…AEQP, HATQ…SSFP, and PQGH…PPGN. Over residues 328–340 the composition is skewed to polar residues; it reads VQRQGSGRESPSL. A phosphoserine mark is found at serine 333 and serine 337. Lysine 346 is covalently cross-linked (Glycyl lysine isopeptide (Lys-Gly) (interchain with G-Cter in SUMO2)). Residue tyrosine 347 is modified to Phosphotyrosine. Asymmetric dimethylarginine is present on arginine 359. A compositionally biased stretch (low complexity) spans 361 to 378; it reads GVRCSSSRGGRPGLSSLP. Serine 389, serine 407, and serine 453 each carry phosphoserine. A compositionally biased stretch (low complexity) spans 454–466; it reads PKSAAPAPVSASC. A compositionally biased stretch (polar residues) spans 475–487; that stretch reads VASSASIPVTSSV. Phosphoserine is present on residues serine 496 and serine 499. The segment covering 508–519 has biased composition (basic and acidic residues); it reads DVKELPTKEPSR. A phosphoserine mark is found at serine 560, serine 561, and serine 562. Over residues 578-587 the composition is skewed to basic and acidic residues; sequence EAKGKEKEVD. Phosphoserine is present on serine 597. Position 635 is a phosphothreonine (threonine 635). Serine 637, serine 677, serine 683, and serine 687 each carry phosphoserine. Residues 681 to 697 show a composition bias toward low complexity; it reads STSTPTSPGPRTHSTPS. 2 stretches are compositionally biased toward polar residues: residues 824-845 and 878-902; these read SNPR…STPQ and QPAT…QHQA. Over residues 935 to 944 the composition is skewed to low complexity; that stretch reads SAQSPQSSFP. Polar residues predominate over residues 1033–1042; it reads QVQSHPSQQL.

It belongs to the ataxin-2 family. As to quaternary structure, interacts with MPL/TPOR and EPOR and dissociates after ligand stimulation. Interacts with DDX6, G3BP, and ATXN2. Interacts with PRMT1. Interacts with CIC and ATXN1. In terms of processing, thrombopoietin triggers the phosphorylation on tyrosine residues in a way that is dependent on MPL C-terminal domain. Post-translationally, asymmetrically dimethylated. Probably methylated by PRMT1. As to expression, expressed in cerebellum.

The protein localises to the membrane. Its subcellular location is the cytoplasm. It localises to the nucleus speckle. It is found in the cytoplasmic granule. Its function is as follows. Involved in the regulation of stress granule and P-body formation. The polypeptide is Ataxin-2-like protein (Atxn2l) (Mus musculus (Mouse)).